Here is a 743-residue protein sequence, read N- to C-terminus: tRNA(Met) cytidine acetyltransferase TmcA (743 aa).

Residues Gln216, 241–250 (GRGKSASIGL), and Arg390 each bind ATP. The N-acetyltransferase domain maps to 420-604 (LKIEDVSQEE…YSVIVIRALS (185 aa)). Acetyl-CoA is bound by residues 531-533 (IAV) and 538-544 (QGKGIGS).

The protein belongs to the RNA cytidine acetyltransferase family. TmcA subfamily.

Its subcellular location is the cytoplasm. It carries out the reaction cytidine(34) in elongator tRNA(Met) + acetyl-CoA + ATP + H2O = N(4)-acetylcytidine(34) in elongator tRNA(Met) + ADP + phosphate + CoA + H(+). Its function is as follows. Catalyzes the formation of N(4)-acetylcytidine (ac(4)C) at the wobble position of tRNA(Met), by using acetyl-CoA as an acetyl donor and ATP (or GTP). The chain is tRNA(Met) cytidine acetyltransferase TmcA from Saccharolobus islandicus (strain Y.G.57.14 / Yellowstone #1) (Sulfolobus islandicus).